Consider the following 573-residue polypeptide: Proline--tRNA ligase (573 aa).

This sequence belongs to the class-II aminoacyl-tRNA synthetase family. ProS type 1 subfamily. Homodimer.

Its subcellular location is the cytoplasm. It catalyses the reaction tRNA(Pro) + L-proline + ATP = L-prolyl-tRNA(Pro) + AMP + diphosphate. Functionally, catalyzes the attachment of proline to tRNA(Pro) in a two-step reaction: proline is first activated by ATP to form Pro-AMP and then transferred to the acceptor end of tRNA(Pro). As ProRS can inadvertently accommodate and process non-cognate amino acids such as alanine and cysteine, to avoid such errors it has two additional distinct editing activities against alanine. One activity is designated as 'pretransfer' editing and involves the tRNA(Pro)-independent hydrolysis of activated Ala-AMP. The other activity is designated 'posttransfer' editing and involves deacylation of mischarged Ala-tRNA(Pro). The misacylated Cys-tRNA(Pro) is not edited by ProRS. This is Proline--tRNA ligase from Elusimicrobium minutum (strain Pei191).